A 344-amino-acid polypeptide reads, in one-letter code: 17-beta-hydroxysteroid dehydrogenase type 1 (344 aa).

3-32 (PTVVLITGCSSGIGMHLAVRLASDRSQSFK) is an NAD(+) binding site. NADP(+) contacts are provided by residues 10–38 (GCSSGIGMHLAVRLASDRSQSFKVYATLR) and Asp-66. Position 135 is a phosphoserine (Ser-135). Ser-143 provides a ligand contact to substrate. The active-site Proton acceptor is Tyr-156. Position 160 (Lys-160) interacts with NADP(+).

Belongs to the short-chain dehydrogenases/reductases (SDR) family. Homodimer. Exists predominantly as a homodimer but also exits as monomer.

The protein localises to the cytoplasm. The catalysed reaction is 17beta-estradiol + NAD(+) = estrone + NADH + H(+). It catalyses the reaction 17beta-estradiol + NADP(+) = estrone + NADPH + H(+). It carries out the reaction testosterone + NADP(+) = androst-4-ene-3,17-dione + NADPH + H(+). It functions in the pathway steroid biosynthesis; estrogen biosynthesis. Favors the reduction of estrogens and androgens. Converts estrone (E1) to a more potent estrogen, 17beta-estradiol (E2). Also has 20-alpha-HSD activity. Uses preferentially NADH. In Mus musculus (Mouse), this protein is 17-beta-hydroxysteroid dehydrogenase type 1.